Consider the following 240-residue polypeptide: Cysteine-rich venom protein (240 aa).

A signal peptide spans 1 to 19; that stretch reads MIAFIVLPILAAVLHQSSG. Residues 39 to 166 enclose the SCP domain; the sequence is DLHNSLRRSV…KYRYFYVCQY (128 aa). Disulfide bonds link C75–C153, C92–C167, C148–C164, C186–C193, C189–C198, C202–C235, C211–C229, and C220–C233. Residues 202 to 235 enclose the ShKT domain; sequence CTQENTYSNCNSLVQQSSCQDNNMKTKCPASCFC.

Belongs to the CRISP family. Expressed by the venom gland.

It is found in the secreted. May block ryanodine receptors (RYR). This is Cysteine-rich venom protein from Protobothrops mucrosquamatus (Taiwan habu).